The primary structure comprises 397 residues: Odorant receptor 85a (397 aa).

Residues Met-1–Tyr-46 lie on the Cytoplasmic side of the membrane. Residues Tyr-47 to Met-67 form a helical membrane-spanning segment. Topologically, residues Thr-68–Thr-83 are extracellular. A glycan (N-linked (GlcNAc...) asparagine) is linked at Asn-75. Residues Tyr-84–Met-104 traverse the membrane as a helical segment. Topologically, residues Arg-105–Val-142 are cytoplasmic. A helical transmembrane segment spans residues Val-143–Ile-163. The Extracellular portion of the chain corresponds to Gly-164–Met-192. Residues Ala-193–Leu-213 traverse the membrane as a helical segment. At Arg-214–Met-262 the chain is on the cytoplasmic side. Residues Ile-263–Val-283 traverse the membrane as a helical segment. The Extracellular portion of the chain corresponds to Ser-284–Arg-294. Residues Val-295–Cys-315 traverse the membrane as a helical segment. Topologically, residues Glu-316–Tyr-347 are cytoplasmic. A helical transmembrane segment spans residues Phe-348–Leu-368. Residues Asn-369–Glu-397 lie on the Extracellular side of the membrane.

This sequence belongs to the insect chemoreceptor superfamily. Heteromeric odorant receptor channel (TC 1.A.69) family. Or2a subfamily. As to quaternary structure, interacts with Orco. Complexes exist early in the endomembrane system in olfactory sensory neurons (OSNs), coupling these complexes to the conserved ciliary trafficking pathway. As to expression, expressed in olfactory sensory neurons in the antenna.

It localises to the cell membrane. Functionally, odorant receptor which mediates acceptance or avoidance behavior, depending on its substrates. The odorant receptor repertoire encodes a large collection of odor stimuli that vary widely in identity, intensity, and duration. May form a complex with Orco to form odorant-sensing units, providing sensitive and prolonged odorant signaling and calcium permeability. The protein is Odorant receptor 85a (Or85a) of Drosophila melanogaster (Fruit fly).